The sequence spans 273 residues: Putative cysteine-rich repeat secretory protein 40 (273 aa).

The first 32 residues, 1–32, serve as a signal peptide directing secretion; it reads MYPSCSLLQRLVWFPFLALVATQLLFIRNVSS. 2 Gnk2-homologous domains span residues 39-141 and 151-264; these read YLHH…SISV and YENN…LYPF.

It belongs to the cysteine-rich repeat secretory protein family.

The protein localises to the secreted. In Arabidopsis thaliana (Mouse-ear cress), this protein is Putative cysteine-rich repeat secretory protein 40 (CRRSP40).